Reading from the N-terminus, the 65-residue chain is Photosystem II reaction center protein J (65 aa).

Residues 35–55 traverse the membrane as a helical segment; that stretch reads LWLVATAGGTAVIFVLGIFFY.

Belongs to the PsbJ family. PSII is composed of 1 copy each of membrane proteins PsbA, PsbB, PsbC, PsbD, PsbE, PsbF, PsbH, PsbI, PsbJ, PsbK, PsbL, PsbM, PsbT, PsbX, PsbY, Psb30/Ycf12, peripheral proteins PsbO, CyanoQ (PsbQ), PsbU, PsbV and a large number of cofactors. It forms dimeric complexes.

Its subcellular location is the cellular thylakoid membrane. Its function is as follows. One of the components of the core complex of photosystem II (PSII). PSII is a light-driven water:plastoquinone oxidoreductase that uses light energy to abstract electrons from H(2)O, generating O(2) and a proton gradient subsequently used for ATP formation. It consists of a core antenna complex that captures photons, and an electron transfer chain that converts photonic excitation into a charge separation. The polypeptide is Photosystem II reaction center protein J (Prochlorococcus marinus (strain NATL2A)).